The chain runs to 538 residues: Zinc finger protein with KRAB and SCAN domains 3 (538 aa).

Residue S42 is modified to Phosphoserine. The region spanning 46–128 is the SCAN box domain; the sequence is RERFRGFRYP…VLLEYLERQL (83 aa). A Glycyl lysine isopeptide (Lys-Gly) (interchain with G-Cter in SUMO2) cross-link involves residue K171. Residue T207 is modified to Phosphothreonine. Residues 214–274 form the KRAB domain; it reads LKVEDVALTL…PAEELPEKEH (61 aa). Residues 226 to 236 are compositionally biased toward polar residues; it reads EWTQQDSSQGN. The interval 226-274 is disordered; sequence EWTQQDSSQGNLCRDEKQENHGSLVSLGDEKQTKSRDLPPAEELPEKEH. The span at 253–274 shows a compositional bias: basic and acidic residues; it reads GDEKQTKSRDLPPAEELPEKEH. 5 C2H2-type zinc fingers span residues 314–336, 342–364, 370–392, 398–420, and 426–448; these read HICHECGKSFAQSSGLSKHRRIH, YECEECGKAFIGSSALVIHQRVH, YECEECGKAFSHSSDLIKHQRTH, YECDDCGKTFSQSCSLLEHHRIH, and YQCSMCGKAFRRSSHLLRHQRIH. T449 carries the phosphothreonine modification. 2 consecutive C2H2-type zinc fingers follow at residues 480-502 and 508-530; these read YKCNECERSFTQNTGLIEHQKIH and YQCNACGKGFTRISYLVQHQRSH.

It belongs to the krueppel C2H2-type zinc-finger protein family.

It localises to the nucleus. Its subcellular location is the cytoplasm. Functionally, transcriptional factor that binds to the consensus sequence 5'-[GT][AG][AGT]GGGG-3' and acts as a repressor of autophagy. Specifically represses expression of genes involved in autophagy and lysosome biogenesis/function such as MAP1LC3B, ULK1 or WIPI2. Associates with chromatin at the ITGB4 and VEGF promoters. Also acts as a transcription activator and promotes cancer cell progression and/or migration in various tumors and myelomas. This Homo sapiens (Human) protein is Zinc finger protein with KRAB and SCAN domains 3 (ZKSCAN3).